Here is a 648-residue protein sequence, read N- to C-terminus: MTYDEYKEKVKTLKKWAYAYYVEDNPVATDEEYDRLYHEVLDYEMKHPDKALEDSPTKRVGGIVRDEFTKAKHIKRMWSMEDVFSKEEVQDWLDRVEKNVGECDYFCEPKFDGASMNLLYDDGKLLRAITRGDGVVGEEVTDNVRTIRSVPLVIDYKGLIEIRGEVVIRKDDFEQINEERLKAGEAPFANPRNAAAGSLRQLDSSVTAKRRLVFYPWGIGENTLDQKKLSEKMEFIYGQGFLRPPYHEACHTIDNIEKFYQFLISKRDEIPMMMDGMVIKVDEIEKQEELGYTVKFPRWMCAYKFPAVEKVTQIRAITLQVGRTGVITPVAEIEPVNIEGAMVSRATLHNFDEIERKDIRIGDHVIIIRSGDVIPKITKVLIDRRTGDEIPVERPTHCPTCGSELLDEGALIKCQNLECPDRVINTIIHFAKKGCMDIDGLGSKIVEQLVKEGKIHDILDLYSLTYEDLADLEGFKEKKISNLLDAIAASKGAPLHRLITAMGIEHIGEVASRALALEFGLGIVDAKYEDIVAIDGIGEEMANSLLEFMRVNREKVLKLFNTIKPTVEKKVEAKENPFKGKIVVLTGTMSESRGKIKEMLEELGAKVSGSVSKKTDFVIYGEDAGSKLTKAESLGVPTLTEDEMRAML.

NAD(+)-binding positions include 30-34 (DEEYD), 79-80 (SM), and glutamate 108. The N6-AMP-lysine intermediate role is filled by lysine 110. NAD(+) is bound by residues arginine 131, glutamate 165, lysine 280, and lysine 304. The Zn(2+) site is built by cysteine 398, cysteine 401, cysteine 414, and cysteine 419. Residues 573–648 (AKENPFKGKI…LTEDEMRAML (76 aa)) form the BRCT domain.

This sequence belongs to the NAD-dependent DNA ligase family. LigA subfamily. Requires Mg(2+) as cofactor. Mn(2+) is required as a cofactor.

The catalysed reaction is NAD(+) + (deoxyribonucleotide)n-3'-hydroxyl + 5'-phospho-(deoxyribonucleotide)m = (deoxyribonucleotide)n+m + AMP + beta-nicotinamide D-nucleotide.. DNA ligase that catalyzes the formation of phosphodiester linkages between 5'-phosphoryl and 3'-hydroxyl groups in double-stranded DNA using NAD as a coenzyme and as the energy source for the reaction. It is essential for DNA replication and repair of damaged DNA. This chain is DNA ligase, found in Sulfurovum sp. (strain NBC37-1).